The sequence spans 443 residues: Mevalonate kinase (443 aa).

ATP-binding positions include Lys12, Ser138, and 143–149 (GAGLGSS). The Mg(2+) site is built by Ser149 and Glu191. Residue Asp202 is the Proton acceptor of the active site.

It belongs to the GHMP kinase family. Mevalonate kinase subfamily. Homodimer. Mg(2+) serves as cofactor.

The protein resides in the cytoplasm. The protein localises to the cytosol. It carries out the reaction (R)-mevalonate + ATP = (R)-5-phosphomevalonate + ADP + H(+). It functions in the pathway isoprenoid biosynthesis; isopentenyl diphosphate biosynthesis via mevalonate pathway; isopentenyl diphosphate from (R)-mevalonate: step 1/3. With respect to regulation, farnesyl pyrophosphate and geranyl pyrophosphate inhibit mevalonate kinase by binding competitively at the ATP-binding site. Mevalonate kinase; part of the second module of ergosterol biosynthesis pathway that includes the middle steps of the pathway. ERG12 converts mevalonate into 5-phosphomevalonate. The second module is carried out in the vacuole and involves the formation of farnesyl diphosphate, which is also an important intermediate in the biosynthesis of ubiquinone, dolichol, heme and prenylated proteins. Activity by the mevalonate kinase ERG12 first converts mevalonate into 5-phosphomevalonate. 5-phosphomevalonate is then further converted to 5-diphosphomevalonate by the phosphomevalonate kinase ERG8. The diphosphomevalonate decarboxylase MVD1/ERG19 then produces isopentenyl diphosphate. The isopentenyl-diphosphate delta-isomerase IDI1 then catalyzes the 1,3-allylic rearrangement of the homoallylic substrate isopentenyl (IPP) to its highly electrophilic allylic isomer, dimethylallyl diphosphate (DMAPP). Finally the farnesyl diphosphate synthase ERG20 catalyzes the sequential condensation of isopentenyl pyrophosphate with dimethylallyl pyrophosphate, and then with the resultant geranylpyrophosphate to the ultimate product farnesyl pyrophosphate. This is Mevalonate kinase from Saccharomyces cerevisiae (strain ATCC 204508 / S288c) (Baker's yeast).